We begin with the raw amino-acid sequence, 189 residues long: Orotate phosphoribosyltransferase (189 aa).

Residues R94, K95, K98, and 120–128 (EDVTTTGGS) each bind 5-phospho-alpha-D-ribose 1-diphosphate. T124 and R152 together coordinate orotate.

It belongs to the purine/pyrimidine phosphoribosyltransferase family. PyrE subfamily. In terms of assembly, homodimer. Mg(2+) serves as cofactor.

The catalysed reaction is orotidine 5'-phosphate + diphosphate = orotate + 5-phospho-alpha-D-ribose 1-diphosphate. It participates in pyrimidine metabolism; UMP biosynthesis via de novo pathway; UMP from orotate: step 1/2. Functionally, catalyzes the transfer of a ribosyl phosphate group from 5-phosphoribose 1-diphosphate to orotate, leading to the formation of orotidine monophosphate (OMP). This chain is Orotate phosphoribosyltransferase, found in Thermococcus gammatolerans (strain DSM 15229 / JCM 11827 / EJ3).